A 223-amino-acid chain; its full sequence is Deoxyribose-phosphate aldolase (223 aa).

Residue aspartate 89 is the Proton donor/acceptor of the active site. The active-site Schiff-base intermediate with acetaldehyde is the lysine 152. Catalysis depends on lysine 181, which acts as the Proton donor/acceptor.

It belongs to the DeoC/FbaB aldolase family. DeoC type 1 subfamily.

The protein localises to the cytoplasm. It carries out the reaction 2-deoxy-D-ribose 5-phosphate = D-glyceraldehyde 3-phosphate + acetaldehyde. The protein operates within carbohydrate degradation; 2-deoxy-D-ribose 1-phosphate degradation; D-glyceraldehyde 3-phosphate and acetaldehyde from 2-deoxy-alpha-D-ribose 1-phosphate: step 2/2. Functionally, catalyzes a reversible aldol reaction between acetaldehyde and D-glyceraldehyde 3-phosphate to generate 2-deoxy-D-ribose 5-phosphate. The chain is Deoxyribose-phosphate aldolase from Listeria welshimeri serovar 6b (strain ATCC 35897 / DSM 20650 / CCUG 15529 / CIP 8149 / NCTC 11857 / SLCC 5334 / V8).